Here is a 393-residue protein sequence, read N- to C-terminus: Pyrimidine monooxygenase RutA (393 aa).

FMN contacts are provided by residues Ile79–Lys80, Asn145, Glu154, Arg170–Tyr171, and Ser220.

Belongs to the NtaA/SnaA/DszA monooxygenase family. RutA subfamily.

The enzyme catalyses uracil + FMNH2 + NADH + O2 = (Z)-3-ureidoacrylate + FMN + NAD(+) + H2O + H(+). The catalysed reaction is thymine + FMNH2 + NADH + O2 = (Z)-2-methylureidoacrylate + FMN + NAD(+) + H2O + H(+). Functionally, catalyzes the pyrimidine ring opening between N-3 and C-4 by an unusual flavin hydroperoxide-catalyzed mechanism, adding oxygen atoms in the process to yield ureidoacrylate peracid, that immediately reacts with FMN forming ureidoacrylate and FMN-N(5)-oxide. The FMN-N(5)-oxide reacts spontaneously with NADH to produce FMN. Requires the flavin reductase RutF to regenerate FMN in vivo. The sequence is that of Pyrimidine monooxygenase RutA from Escherichia coli O9:H4 (strain HS).